Consider the following 162-residue polypeptide: RNA pyrophosphohydrolase (162 aa).

In terms of domain architecture, Nudix hydrolase spans 11 to 155; sequence PYRPCVGIVL…KRAVYEEVVA (145 aa). The short motif at 45–66 is the Nudix box element; sequence GGIDEGEKPREAALRELWEETG.

This sequence belongs to the Nudix hydrolase family. RppH subfamily. A divalent metal cation is required as a cofactor.

Accelerates the degradation of transcripts by removing pyrophosphate from the 5'-end of triphosphorylated RNA, leading to a more labile monophosphorylated state that can stimulate subsequent ribonuclease cleavage. This is RNA pyrophosphohydrolase from Cereibacter sphaeroides (strain ATCC 17029 / ATH 2.4.9) (Rhodobacter sphaeroides).